Reading from the N-terminus, the 151-residue chain is Natriuretic peptides A (151 aa).

Positions 1–25 (MSSFSTTTVSFLLLLAFQLLGQTRA) are cleaved as a signal peptide. The interval 62–105 (VLSEPNEEAGAALSPLPEVPPWTGEVSPAQRDGGALGRGPWDSS) is disordered. A propeptide spanning residues 93-103 (DGGALGRGPWD) is cleaved from the precursor. Phosphoserine is present on S129. The cysteines at positions 130 and 146 are disulfide-linked. The segment at 147-151 (NSFRY) is important for degradation of atrial natriuretic peptide by IDE.

The protein belongs to the natriuretic peptide family. In terms of assembly, homodimer; disulfide-linked antiparallel dimer. In terms of processing, the precursor molecule is proteolytically cleaved by CORIN at Arg-123 to produce atrial natriuretic peptide. Undergoes further proteolytic cleavage by unknown proteases to give rise to long-acting natriuretic peptide, vessel dilator and kaliuretic peptide. Additional processing gives rise to the auriculin and atriopeptin peptides. In the kidneys, alternative processing by an unknown protease results in the peptide urodilatin. Cleavage by MME initiates degradation of the factor and thereby regulates its activity. Degraded by IDE (in vitro). During IDE degradation, the resulting products can temporarily stimulate NPR2 to produce cGMP, before the fragments are completely degraded and inactivated by IDE (in vitro). Post-translationally, degraded by IDE. In terms of processing, phosphorylation on Ser-129 decreases vasorelaxant activity. Detected in the kidney distal tubular cells (at protein level). Present in urine (at protein level). In terms of tissue distribution, detected in atrial and ventricular plasma samples, and in adipocytes (at protein level). Detected in urine in one study. However, was not detected in urine in another study. In the brain, predominantly expressed in the gray matter with very weak expression in the white matter (at protein level). Localizes to astrocyte-like structures throughout the white matter, and in the cerebral vessels detected in the leptomeningeal and parenchymal vessels, and endothelium and smooth muscle layers (at protein level). Relatively low levels of expression in the kidneys compared to urodilatin (at protein level).

It localises to the secreted. The protein resides in the perikaryon. Its subcellular location is the cell projection. In terms of biological role, hormone that plays a key role in mediating cardio-renal homeostasis, and is involved in vascular remodeling and regulating energy metabolism. Acts by specifically binding and stimulating NPR1 to produce cGMP, which in turn activates effector proteins, such as PRKG1, that drive various biological responses. Regulates vasodilation, natriuresis, diuresis and aldosterone synthesis and is therefore essential for regulating blood pressure, controlling the extracellular fluid volume and maintaining the fluid-electrolyte balance. Also involved in inhibiting cardiac remodeling and cardiac hypertrophy by inducing cardiomyocyte apoptosis and attenuating the growth of cardiomyocytes and fibroblasts. Plays a role in female pregnancy by promoting trophoblast invasion and spiral artery remodeling in uterus, and thus prevents pregnancy-induced hypertension. In adipose tissue, acts in various cGMP- and PKG-dependent pathways to regulate lipid metabolism and energy homeostasis. This includes up-regulating lipid metabolism and mitochondrial oxygen utilization by activating the AMP-activated protein kinase (AMPK), and increasing energy expenditure by acting via MAPK11 to promote the UCP1-dependent thermogenesis of brown adipose tissue. Binds the clearance receptor NPR3 which removes the hormone from circulation. Functionally, may have a role in cardio-renal homeostasis through regulation of natriuresis, diuresis, vasodilation, and inhibiting aldosterone synthesis. In vitro, promotes the production of cGMP and induces vasodilation. May promote natriuresis, at least in part, by enhancing prostaglandin E2 synthesis resulting in the inhibition of renal Na+-K+-ATPase. However reports on the involvement of this peptide in mammal blood volume and blood pressure homeostasis are conflicting; according to a report, in vivo it is not sufficient to activate cGMP and does not inhibit collecting duct transport nor effect diuresis and natriuresis. Appears to bind to specific receptors that are distinct from the receptors bound by atrial natriuretic peptide and vessel dilator. Possibly enhances protein excretion in urine by decreasing proximal tubular protein reabsorption. May have a role in cardio-renal homeostasis through regulation of natriuresis, diuresis, and vasodilation. In vitro, promotes the production of cGMP and induces vasodilation. May promote natriuresis, at least in part, by enhancing prostaglandin E2 synthesis resulting in the inhibition of renal Na+-K+-ATPase. However reports on the involvement of this peptide in mammal blood volume and blood pressure homeostasis are conflicting; according to a report it is not sufficient to activate cGMP and does not inhibit collecting duct transport nor effect diuresis and natriuresis. Appears to bind to specific receptors that are distinct from the receptors bound by the atrial natriuretic and long-acting natriuretic peptides. Possibly functions in protein excretion in urine by maintaining the integrity of the proximal tubules and enhancing protein excretion by decreasing proximal tubular protein reabsorption. Its function is as follows. May have a role in cardio-renal homeostasis through regulation of diuresis and inhibiting aldosterone synthesis. In vitro, promotes the production of cGMP and induces vasodilation. May promote natriuresis, at least in part, by enhancing prostaglandin E2 synthesis resulting in the inhibition of renal Na+-K+-ATPase. May have a role in potassium excretion but not sodium excretion (natriuresis). Possibly enhances protein excretion in urine by decreasing proximal tubular protein reabsorption. In terms of biological role, hormone produced in the kidneys that appears to be important for maintaining cardio-renal homeostasis. Mediates vasodilation, natriuresis and diuresis primarily in the renal system, in order to maintain the extracellular fluid volume and control the fluid-electrolyte balance. Specifically binds and stimulates cGMP production by renal transmembrane receptors, likely NPR1. Urodilatin not ANP, may be the natriuretic peptide responsible for the regulation of sodium and water homeostasis in the kidney. Functionally, may have a role in cardio-renal homeostasis through regulation of natriuresis and vasodilation. In vivo promotes natriuresis and in vitro, vasodilates renal artery strips. May have a role in cardio-renal homeostasis through regulation of regulation of natriuresis and vasodilation. In vivo promotes natriuresis. In vitro, vasodilates intestinal smooth muscle but not smooth muscle strips. Its function is as follows. May have a role in cardio-renal homeostasis through regulation of natriuresis and vasodilation. In vivo promotes natriuresis. In vitro, selectively vasodilates intestinal and vascular smooth muscle strips. In terms of biological role, may have a role in cardio-renal homeostasis through regulation of natriuresis and vasodilation. In vivo promotes natriuresis. In vitro, selectively vasodilates intestinal smooth muscle but not vascular smooth muscle strips. This is Natriuretic peptides A (NPPA) from Homo sapiens (Human).